The following is a 202-amino-acid chain: High mobility group protein B3 (202 aa).

2 DNA-binding regions (HMG box) span residues 9 to 79 (PKGK…KDYG) and 93 to 161 (PKRP…ADYK). Residues C23 and C45 each carry the cysteine sulfonic acid (-SO3H); alternate modification. Residues C23 and C45 are joined by a disulfide bond. The disordered stretch occupies residues 71–98 (YDREMKDYGPAKGGKKKKDPNAPKRPPS). C104 is subject to Cysteine sulfonic acid (-SO3H). The disordered stretch occupies residues 161–202 (KSKGKFDGAKGAATKAARKKVEEEDEEEEEDEEEEDEDDDDE). Residues 183 to 202 (EEDEEEEEDEEEEDEDDDDE) show a composition bias toward acidic residues.

Belongs to the HMGB family. Reduction/oxidation of cysteine residues Cys-23, Cys-45 and Cys-104 and a possible intramolecular disulfide bond involving Cys-23 and Cys-45 give rise to different redox forms with specific functional activities in various cellular compartments: 1- fully reduced HMGB3 (HMGB3C23hC45hC104h), 2- disulfide HMGB3 (HMGB3C23-C45C104h) and 3- sulfonyl HMGB3 (HMGB3C23soC45soC104so).

It is found in the nucleus. It localises to the chromosome. Its subcellular location is the cytoplasm. Multifunctional protein with various roles in different cellular compartments. May act in a redox sensitive manner. Associates with chromatin and binds DNA with a preference for non-canonical DNA structures such as single-stranded DNA. Can bend DNA and enhance DNA flexibility by looping thus providing a mechanism to promote activities on various gene promoters. Binds to the delta-1 crystallin/ASL1 enhancer. Proposed to be involved in the innate immune response to nucleic acids by acting as a cytoplasmic promiscuous immunogenic DNA/RNA sensor. The sequence is that of High mobility group protein B3 (HMGB3) from Gallus gallus (Chicken).